A 419-amino-acid polypeptide reads, in one-letter code: Tyrosine--tRNA ligase (419 aa).

Residue tyrosine 34 coordinates L-tyrosine. A 'HIGH' region motif is present at residues 39-48 (PTADSLHLGN). L-tyrosine contacts are provided by tyrosine 169 and glutamine 173. The 'KMSKS' region signature appears at 229–233 (KFGKS). Residue lysine 232 coordinates ATP. The region spanning 353-419 (LTLVELLISA…GKKKNFVLTY (67 aa)) is the S4 RNA-binding domain.

Belongs to the class-I aminoacyl-tRNA synthetase family. TyrS type 1 subfamily. Homodimer.

Its subcellular location is the cytoplasm. The catalysed reaction is tRNA(Tyr) + L-tyrosine + ATP = L-tyrosyl-tRNA(Tyr) + AMP + diphosphate + H(+). Catalyzes the attachment of tyrosine to tRNA(Tyr) in a two-step reaction: tyrosine is first activated by ATP to form Tyr-AMP and then transferred to the acceptor end of tRNA(Tyr). The protein is Tyrosine--tRNA ligase of Lactococcus lactis subsp. lactis (strain IL1403) (Streptococcus lactis).